We begin with the raw amino-acid sequence, 40 residues long: Dermonecrotic toxin LgSicTox-alphaI-1 (40 aa).

Residues E32 and D34 each contribute to the Mg(2+) site.

It belongs to the arthropod phospholipase D family. Class II subfamily. It depends on Mg(2+) as a cofactor. Contains 2 disulfide bonds. In terms of tissue distribution, expressed by the venom gland.

Its subcellular location is the secreted. The enzyme catalyses an N-(acyl)-sphingosylphosphocholine = an N-(acyl)-sphingosyl-1,3-cyclic phosphate + choline. It carries out the reaction an N-(acyl)-sphingosylphosphoethanolamine = an N-(acyl)-sphingosyl-1,3-cyclic phosphate + ethanolamine. It catalyses the reaction a 1-acyl-sn-glycero-3-phosphocholine = a 1-acyl-sn-glycero-2,3-cyclic phosphate + choline. The catalysed reaction is a 1-acyl-sn-glycero-3-phosphoethanolamine = a 1-acyl-sn-glycero-2,3-cyclic phosphate + ethanolamine. Functionally, dermonecrotic toxins cleave the phosphodiester linkage between the phosphate and headgroup of certain phospholipids (sphingolipid and lysolipid substrates), forming an alcohol (often choline) and a cyclic phosphate. This toxin acts on sphingomyelin (SM). It may also act on ceramide phosphoethanolamine (CPE), lysophosphatidylcholine (LPC) and lysophosphatidylethanolamine (LPE), but not on lysophosphatidylserine (LPS), and lysophosphatidylglycerol (LPG). It acts by transphosphatidylation, releasing exclusively cyclic phosphate products as second products. In vivo, intradermal injection induces dermonecrosis. Induces, hemolysis, vascular permeability, edema, inflammatory response, and platelet aggregation. The sequence is that of Dermonecrotic toxin LgSicTox-alphaI-1 from Loxosceles gaucho (Spider).